Consider the following 451-residue polypeptide: Cytochrome c biogenesis protein CcsB (451 aa).

A run of 3 helical transmembrane segments spans residues Leu30–Ile50, Thr89–Thr109, and Ile175–Ala195.

It belongs to the Ccs1/CcsB family. May interact with CcsA.

It localises to the cellular thylakoid membrane. In terms of biological role, required during biogenesis of c-type cytochromes (cytochrome c6 and cytochrome f) at the step of heme attachment. The protein is Cytochrome c biogenesis protein CcsB of Crocosphaera subtropica (strain ATCC 51142 / BH68) (Cyanothece sp. (strain ATCC 51142)).